The sequence spans 234 residues: Demethylmenaquinone methyltransferase (234 aa).

Residues T58, D79, and N106–A107 contribute to the S-adenosyl-L-methionine site.

Belongs to the class I-like SAM-binding methyltransferase superfamily. MenG/UbiE family.

It carries out the reaction a 2-demethylmenaquinol + S-adenosyl-L-methionine = a menaquinol + S-adenosyl-L-homocysteine + H(+). It participates in quinol/quinone metabolism; menaquinone biosynthesis; menaquinol from 1,4-dihydroxy-2-naphthoate: step 2/2. Its function is as follows. Methyltransferase required for the conversion of demethylmenaquinol (DMKH2) to menaquinol (MKH2). The protein is Demethylmenaquinone methyltransferase of Geobacillus sp. (strain WCH70).